The sequence spans 479 residues: Sulfate adenylyltransferase subunit 1 (479 aa).

The region spanning 25–239 (KSLLRFLTCG…EVLETVDIQR (215 aa)) is the tr-type G domain. Residues 34-41 (GSVDDGKS) are G1. GTP is bound at residue 34–41 (GSVDDGKS). Positions 92 to 96 (GITID) are G2. The interval 113-116 (DTPG) is G3. GTP contacts are provided by residues 113 to 117 (DTPGH) and 168 to 171 (NKMD). The tract at residues 168–171 (NKMD) is G4. The G5 stretch occupies residues 206–208 (SAL).

This sequence belongs to the TRAFAC class translation factor GTPase superfamily. Classic translation factor GTPase family. CysN/NodQ subfamily. As to quaternary structure, heterodimer composed of CysD, the smaller subunit, and CysN.

It catalyses the reaction sulfate + ATP + H(+) = adenosine 5'-phosphosulfate + diphosphate. It functions in the pathway sulfur metabolism; hydrogen sulfide biosynthesis; sulfite from sulfate: step 1/3. In terms of biological role, with CysD forms the ATP sulfurylase (ATPS) that catalyzes the adenylation of sulfate producing adenosine 5'-phosphosulfate (APS) and diphosphate, the first enzymatic step in sulfur assimilation pathway. APS synthesis involves the formation of a high-energy phosphoric-sulfuric acid anhydride bond driven by GTP hydrolysis by CysN coupled to ATP hydrolysis by CysD. The chain is Sulfate adenylyltransferase subunit 1 from Salmonella agona (strain SL483).